We begin with the raw amino-acid sequence, 180 residues long: Ribosome maturation factor RimM (180 aa).

The PRC barrel domain occupies 108–180 (PDEYYWVDLE…LIVVDWDPDF (73 aa)).

This sequence belongs to the RimM family. As to quaternary structure, binds ribosomal protein uS19.

Its subcellular location is the cytoplasm. In terms of biological role, an accessory protein needed during the final step in the assembly of 30S ribosomal subunit, possibly for assembly of the head region. Essential for efficient processing of 16S rRNA. May be needed both before and after RbfA during the maturation of 16S rRNA. It has affinity for free ribosomal 30S subunits but not for 70S ribosomes. This Xanthomonas euvesicatoria pv. vesicatoria (strain 85-10) (Xanthomonas campestris pv. vesicatoria) protein is Ribosome maturation factor RimM.